A 154-amino-acid chain; its full sequence is 3-dehydroquinate dehydratase (154 aa).

Residue Y22 is the Proton acceptor of the active site. 3 residues coordinate substrate: N73, H79, and D86. The active-site Proton donor is the H99. Substrate is bound by residues 100–101 (LS) and R110.

It belongs to the type-II 3-dehydroquinase family. In terms of assembly, homododecamer.

The enzyme catalyses 3-dehydroquinate = 3-dehydroshikimate + H2O. Its pathway is metabolic intermediate biosynthesis; chorismate biosynthesis; chorismate from D-erythrose 4-phosphate and phosphoenolpyruvate: step 3/7. Functionally, catalyzes a trans-dehydration via an enolate intermediate. The sequence is that of 3-dehydroquinate dehydratase from Carboxydothermus hydrogenoformans (strain ATCC BAA-161 / DSM 6008 / Z-2901).